A 120-amino-acid chain; its full sequence is NAD(P)H-quinone oxidoreductase subunit 3, chloroplastic (120 aa).

3 helical membrane passes run 9–29, 64–84, and 88–108; these read IFWA…LISG, MFAL…PWAM, and VLGV…ILGL.

The protein belongs to the complex I subunit 3 family. In terms of assembly, NDH is composed of at least 16 different subunits, 5 of which are encoded in the nucleus.

It is found in the plastid. It localises to the chloroplast thylakoid membrane. The enzyme catalyses a plastoquinone + NADH + (n+1) H(+)(in) = a plastoquinol + NAD(+) + n H(+)(out). It carries out the reaction a plastoquinone + NADPH + (n+1) H(+)(in) = a plastoquinol + NADP(+) + n H(+)(out). In terms of biological role, NDH shuttles electrons from NAD(P)H:plastoquinone, via FMN and iron-sulfur (Fe-S) centers, to quinones in the photosynthetic chain and possibly in a chloroplast respiratory chain. The immediate electron acceptor for the enzyme in this species is believed to be plastoquinone. Couples the redox reaction to proton translocation, and thus conserves the redox energy in a proton gradient. The protein is NAD(P)H-quinone oxidoreductase subunit 3, chloroplastic of Draba nemorosa (Woodland whitlowgrass).